The primary structure comprises 353 residues: MTAILERRETESLWGRFCNWITSTENRLYIGWFGVLMIPTLLTATSVFIIAFIAAPPVDIDGIREPVSGSLLYGNNIISGAIIPTSAAIGLHFYPIWEAASVDEWLYNGGPYELIVLHFLLGVACYMGREWELSFRLGMRPWIAVAYSAPVAAATAVFLIYPIGQGSFSDGMPLGISGTFNFMIVFQAEHNILMHPFHMLGVAGVFGGSLFSAMHGSLVTSSLIRETTENESANEGYRFGQEEETYNIVAAHGYFGRLIFQYASFNNSRSLHFFLAAWPVVGIWFTALGISTMAFNLNGFNFNQSVVDSQGRVINTWADIINRANLGMEVMHERNAHNFPLDLAAVEAPSTNG.

Position 2 is an N-acetylthreonine (threonine 2). At threonine 2 the chain carries Phosphothreonine. 3 consecutive transmembrane segments (helical) span residues 29–46 (YIGWFGVLMIPTLLTATS), 118–133 (HFLLGVACYMGREWEL), and 142–156 (WIAVAYSAPVAAATA). Residue histidine 118 participates in chlorophyll a binding. Tyrosine 126 is a binding site for pheophytin a. Residues aspartate 170 and glutamate 189 each contribute to the [CaMn4O5] cluster site. Residues 197–218 (FHMLGVAGVFGGSLFSAMHGSL) form a helical membrane-spanning segment. Position 198 (histidine 198) interacts with chlorophyll a. A quinone-binding positions include histidine 215 and 264–265 (SF). A Fe cation-binding site is contributed by histidine 215. A Fe cation-binding site is contributed by histidine 272. Residues 274 to 288 (FLAAWPVVGIWFTAL) form a helical membrane-spanning segment. The [CaMn4O5] cluster site is built by histidine 332, glutamate 333, aspartate 342, and alanine 344. A propeptide spanning residues 345-353 (AVEAPSTNG) is cleaved from the precursor.

The protein belongs to the reaction center PufL/M/PsbA/D family. As to quaternary structure, PSII is composed of 1 copy each of membrane proteins PsbA, PsbB, PsbC, PsbD, PsbE, PsbF, PsbH, PsbI, PsbJ, PsbK, PsbL, PsbM, PsbT, PsbX, PsbY, PsbZ, Psb30/Ycf12, at least 3 peripheral proteins of the oxygen-evolving complex and a large number of cofactors. It forms dimeric complexes. The D1/D2 heterodimer binds P680, chlorophylls that are the primary electron donor of PSII, and subsequent electron acceptors. It shares a non-heme iron and each subunit binds pheophytin, quinone, additional chlorophylls, carotenoids and lipids. D1 provides most of the ligands for the Mn4-Ca-O5 cluster of the oxygen-evolving complex (OEC). There is also a Cl(-1) ion associated with D1 and D2, which is required for oxygen evolution. The PSII complex binds additional chlorophylls, carotenoids and specific lipids. is required as a cofactor. Tyr-161 forms a radical intermediate that is referred to as redox-active TyrZ, YZ or Y-Z. Post-translationally, C-terminally processed by CTPA; processing is essential to allow assembly of the oxygen-evolving complex and thus photosynthetic growth.

Its subcellular location is the plastid. The protein resides in the chloroplast thylakoid membrane. It carries out the reaction 2 a plastoquinone + 4 hnu + 2 H2O = 2 a plastoquinol + O2. Functionally, photosystem II (PSII) is a light-driven water:plastoquinone oxidoreductase that uses light energy to abstract electrons from H(2)O, generating O(2) and a proton gradient subsequently used for ATP formation. It consists of a core antenna complex that captures photons, and an electron transfer chain that converts photonic excitation into a charge separation. The D1/D2 (PsbA/PsbD) reaction center heterodimer binds P680, the primary electron donor of PSII as well as several subsequent electron acceptors. This chain is Photosystem II protein D1, found in Lepidium virginicum (Virginia pepperweed).